The primary structure comprises 237 residues: Methylthioribulose-1-phosphate dehydratase (237 aa).

Position 97 (Cys-97) interacts with substrate. 2 residues coordinate Zn(2+): His-114 and His-116. The active-site Proton donor/acceptor is the Glu-143. His-199 contributes to the Zn(2+) binding site.

This sequence belongs to the aldolase class II family. MtnB subfamily. Zn(2+) serves as cofactor.

It localises to the cytoplasm. The catalysed reaction is 5-(methylsulfanyl)-D-ribulose 1-phosphate = 5-methylsulfanyl-2,3-dioxopentyl phosphate + H2O. Its pathway is amino-acid biosynthesis; L-methionine biosynthesis via salvage pathway; L-methionine from S-methyl-5-thio-alpha-D-ribose 1-phosphate: step 2/6. Its function is as follows. Catalyzes the dehydration of methylthioribulose-1-phosphate (MTRu-1-P) into 2,3-diketo-5-methylthiopentyl-1-phosphate (DK-MTP-1-P). The chain is Methylthioribulose-1-phosphate dehydratase from Coccidioides posadasii (strain C735) (Valley fever fungus).